The chain runs to 218 residues: Dehydration-responsive element-binding protein 1B (218 aa).

The tract at residues 1–26 (MEVEEAAYRTVWSEPPKRPAGRTKFR) is disordered. The segment at residues 32 to 95 (VYRGVRRRGG…RGRAACLNFA (64 aa)) is a DNA-binding region (AP2/ERF). The tract at residues 131–151 (SAAPSSPAETFADDGDEEEDN) is disordered. Positions 141 to 151 (FADDGDEEEDN) are enriched in acidic residues.

It belongs to the AP2/ERF transcription factor family. ERF subfamily.

The protein resides in the nucleus. Functionally, transcriptional activator that binds specifically to the DNA sequence 5'-[AG]CCGAC-3'. Binding to the C-repeat/DRE element mediates high salinity- and dehydration-inducible transcription. Confers resistance to high salt, cold and drought stress. This is Dehydration-responsive element-binding protein 1B (DREB1B) from Oryza sativa subsp. indica (Rice).